A 707-amino-acid chain; its full sequence is MEVNNMSKTRVYELAKELNISSKDLLSKLSDLDIKVKNHMSTLEDEEVELIKDLLAEKPKEEKQKDQKNHEQEAQDKEEKEIEEDSFYEDREEKRAYKKSFKKGGKKNKKLQKKFVSEESAKEDEIKIITIPEFLTVKELAEKMKVNPTEIIKKLIAQGIMVTVNQQIDFETASKIAEEYGFLVDKEEVKDELEAIFEDTPDREEDLKPRPPIVTVMGHVDHGKTSLLDAIRKTNVTMKEMGGITQHIGASVVEINDKKVVFLDTPGHEAFTAMRARGASVTDIVVLVVAADDGVMPQTIEAINHVKAANVPLIVAINKIDLPTANPDRVKTELSELGLVPEEWGGNTICVPVSAKKNIGIDDLLEMILLVAEMEDLKANPNKPARGTVIEAKLEKGKGPVATVIVQNGTLQVGDAVIAGTTYGKVRAMFDDKGRKIKKAGPSMPVEILGFSEVPEAGDKFVVVENEKKARELAEKRREVQRELELKKKQKVSLEDLFRQIQEGTVKELNVIIKADVQGSVEALRKSLEELSNEEVRIRVIHGAVGAITETDVMLASASNAIIIGFNVRPETNAKALAEKEKVEIKLYRIIYDAIEDVKAAMKGMLEPKYKEVELGRAEVRAVFKIPGVGNVAGCYVLNGKIARNADVRIVRDGIVIYEGKIASLKRFKDDVREVQQGFECGIGIEKFNDIKEGDIIEAYTMEEIPR.

The span at 55 to 80 (LAEKPKEEKQKDQKNHEQEAQDKEEK) shows a compositional bias: basic and acidic residues. The interval 55 to 88 (LAEKPKEEKQKDQKNHEQEAQDKEEKEIEEDSFY) is disordered. The region spanning 209–378 (PRPPIVTVMG…LLVAEMEDLK (170 aa)) is the tr-type G domain. The segment at 218-225 (GHVDHGKT) is G1. Position 218 to 225 (218 to 225 (GHVDHGKT)) interacts with GTP. The interval 243–247 (GITQH) is G2. Positions 264–267 (DTPG) are G3. Residues 264-268 (DTPGH) and 318-321 (NKID) each bind GTP. The tract at residues 318-321 (NKID) is G4. The G5 stretch occupies residues 354–356 (SAK).

It belongs to the TRAFAC class translation factor GTPase superfamily. Classic translation factor GTPase family. IF-2 subfamily.

The protein localises to the cytoplasm. Functionally, one of the essential components for the initiation of protein synthesis. Protects formylmethionyl-tRNA from spontaneous hydrolysis and promotes its binding to the 30S ribosomal subunits. Also involved in the hydrolysis of GTP during the formation of the 70S ribosomal complex. The protein is Translation initiation factor IF-2 of Caldanaerobacter subterraneus subsp. tengcongensis (strain DSM 15242 / JCM 11007 / NBRC 100824 / MB4) (Thermoanaerobacter tengcongensis).